The chain runs to 701 residues: Translation factor GUF1, mitochondrial (701 aa).

The N-terminal 29 residues, 1–29 (MSCCKGLTPQCVRVRLPRRPALSHPARLY), are a transit peptide targeting the mitochondrion. Residues 23-50 (SHPARLYSSSSSSNSHSSPSRPRLLSRP) are compositionally biased toward low complexity. Positions 23 to 85 (SHPARLYSSS…RSSHHSSAPM (63 aa)) are disordered. The 186-residue stretch at 98–283 (ERYRNFCVIA…AVIEQIPHPT (186 aa)) folds into the tr-type G domain. GTP contacts are provided by residues 107-114 (AHVDHGKS), 172-176 (DTPGH), and 226-229 (NKID).

This sequence belongs to the TRAFAC class translation factor GTPase superfamily. Classic translation factor GTPase family. LepA subfamily.

It localises to the mitochondrion inner membrane. It catalyses the reaction GTP + H2O = GDP + phosphate + H(+). Its function is as follows. Promotes mitochondrial protein synthesis. May act as a fidelity factor of the translation reaction, by catalyzing a one-codon backward translocation of tRNAs on improperly translocated ribosomes. Binds to mitochondrial ribosomes in a GTP-dependent manner. This is Translation factor GUF1, mitochondrial from Pyricularia oryzae (strain 70-15 / ATCC MYA-4617 / FGSC 8958) (Rice blast fungus).